A 268-amino-acid polypeptide reads, in one-letter code: Interleukin-1 alpha (268 aa).

Residues 1 to 112 (MAKVPDLFED…DTEEEIIKPR (112 aa)) constitute a propeptide that is removed on maturation. Lys-82 bears the N6-acetyllysine mark. Residues 82–86 (KKRRL) are nuclear localization signal (NLS). At Ser-87 the chain carries Phosphoserine. 2 N-linked (GlcNAc...) asparagine glycosylation sites follow: Asn-102 and Asn-141.

The protein belongs to the IL-1 family. Monomer. Interacts with TMED10; the interaction mediates the translocation from the cytoplasm into the ERGIC (endoplasmic reticulum-Golgi intermediate compartment) and thereby secretion. Interacts with IL1R1. Interacts with S100A13; this interaction is the first step in the export of IL1A, followed by direct translocation of this complex across the plasma membrane. Post-translationally, acetylated within its nuclear localization sequence, which impacts subcellular localization. Proteolytic processed by CAPN1 in a calcium-dependent manner. Cleavage from 31 kDa precursor to 18 kDa biologically active molecules. In terms of processing, phosphorylated. Phosphorylation greatly enhances susceptibility to digestion and promotes the conversion of pre-IL1A alpha to the biologically active IL1A.

It localises to the nucleus. The protein localises to the cytoplasm. It is found in the secreted. Functionally, cytokine constitutively present intracellularly in nearly all resting non-hematopoietic cells that plays an important role in inflammation and bridges the innate and adaptive immune systems. After binding to its receptor IL1R1 together with its accessory protein IL1RAP, forms the high affinity interleukin-1 receptor complex. Signaling involves the recruitment of adapter molecules such as MYD88, IRAK1 or IRAK4. In turn, mediates the activation of NF-kappa-B and the three MAPK pathways p38, p42/p44 and JNK pathways. Within the cell, acts as an alarmin and cell death results in its liberation in the extracellular space after disruption of the cell membrane to induce inflammation and alert the host to injury or damage. In addition to its role as a danger signal, which occurs when the cytokine is passively released by cell necrosis, directly senses DNA damage and acts as signal for genotoxic stress without loss of cell integrity. The protein is Interleukin-1 alpha (IL1A) of Lama glama (Llama).